The chain runs to 134 residues: Protein Turandot E (134 aa).

Residues 1–38 (MSYNRTLHSTTSILKMNSALQISCLLLVLGCLLGSGHG) form the signal peptide.

This sequence belongs to the Turandot family.

It is found in the secreted. In terms of biological role, a humoral factor that may play a role in stress tolerance. The protein is Protein Turandot E of Drosophila yakuba (Fruit fly).